The chain runs to 455 residues: Golgi pH regulator A (455 aa).

A run of 5 helical transmembrane segments spans residues 5–25, 46–66, 79–99, 114–134, and 150–170; these read IDSS…WLFF, VTFA…LGVL, LCVI…YFIV, CLLW…FPIL, and VGVI…VNCP. N-linked (GlcNAc...) asparagine glycosylation is found at asparagine 180 and asparagine 243. A run of 4 helical transmembrane segments spans residues 290–310, 343–363, 378–398, and 425–445; these read GYFF…NIVF, ISFI…LITL, VIVL…VLLI, and WFDV…YLAH.

Belongs to the Golgi pH regulator (TC 1.A.38) family. Homotrimer. Interacts with RABL3; the interaction stabilizes GPR89A. Ubiquitous.

It is found in the golgi apparatus membrane. It carries out the reaction iodide(out) = iodide(in). The enzyme catalyses chloride(in) = chloride(out). The catalysed reaction is bromide(in) = bromide(out). It catalyses the reaction fluoride(in) = fluoride(out). In terms of biological role, voltage-gated channel that enables the transfer of monoatomic anions such as iodide, chloride, bromide and fluoride which may function in counter-ion conductance and participates in Golgi acidification. Plays a role in lymphocyte development, probably by acting as a RABL3 effector in hematopoietic cells. The protein is Golgi pH regulator A of Homo sapiens (Human).